We begin with the raw amino-acid sequence, 473 residues long: Argininosuccinate lyase (473 aa).

Positions 34, 121, and 166 each coordinate 2-(N(omega)-L-arginino)succinate. The Proton acceptor role is filled by His-167. Ser-289 acts as the Proton donor in catalysis. Positions 297, 329, and 334 each coordinate 2-(N(omega)-L-arginino)succinate.

The protein belongs to the lyase 1 family. Argininosuccinate lyase subfamily.

It catalyses the reaction 2-(N(omega)-L-arginino)succinate = fumarate + L-arginine. The protein operates within amino-acid biosynthesis; L-arginine biosynthesis; L-arginine from L-ornithine and carbamoyl phosphate: step 3/3. The chain is Argininosuccinate lyase (ARG7) from Chlamydomonas reinhardtii (Chlamydomonas smithii).